A 235-amino-acid chain; its full sequence is Peptidase E (235 aa).

Catalysis depends on charge relay system residues Ser122, Asp137, and His159.

It belongs to the peptidase S51 family.

Its subcellular location is the cytoplasm. It carries out the reaction Dipeptidase E catalyzes the hydrolysis of dipeptides Asp-|-Xaa. It does not act on peptides with N-terminal Glu, Asn or Gln, nor does it cleave isoaspartyl peptides.. Hydrolyzes dipeptides containing N-terminal aspartate residues. May play a role in allowing the cell to use peptide aspartate to spare carbon otherwise required for the synthesis of the aspartate family of amino acids. This chain is Peptidase E, found in Shewanella denitrificans (strain OS217 / ATCC BAA-1090 / DSM 15013).